Reading from the N-terminus, the 112-residue chain is UstYa family oxidase VicYb (112 aa).

Short sequence motifs (HXXHC) lie at residues 9 to 13 and 36 to 40; these read HYLHC and HLDHC.

The protein belongs to the ustYa family.

It participates in mycotoxin biosynthesis. In terms of biological role, ustYa family oxidase, part of the gene cluster that mediates the biosynthesis of the secondary metabolite victorin, the molecular basis for Victoria blight of oats. Within the pathway, vicYb catalyzes the oxidative cyclization of the core peptide. The pathway starts with the processing of the precursor vicA1 by several endopeptidases including kexin proteases as well as the cluster-specific S28 family peptidases vicPa and vicPb to produce 7 identical copies of the hexapeptide Gly-Leu-Lys-Leu-Ala-Phe. After being excised from the precursor peptide, the core peptides are cyclized and modified post-translationally by enzymes encoded within the gene cluster. The ustYa family oxidase vicYb is required for the formation of the macrocycle in victorin and the copper amine oxidases (CAOs) vicK1 and vicK2 are responsible for converting victorin to the active form by oxidizing the N-terminal glycyl residue in the peptides to glyoxylate. Relaxed substrate specificity of enzymes in the victorin biosynthetic pathway results in a metabolic grid that produces a set of analogs including victorinines B, C, E or HV-toxin M. The sequence is that of UstYa family oxidase VicYb from Bipolaris victoriae (strain FI3) (Victoria blight of oats agent).